A 125-amino-acid chain; its full sequence is Casein kinase I isoform alpha (125 aa).

In terms of domain architecture, Protein kinase spans 1–125 (GEEVAVKLES…LIDFGLAKKY (125 aa)). Position 7 (K7) interacts with ATP. D97 acts as the Proton acceptor in catalysis.

This sequence belongs to the protein kinase superfamily. CK1 Ser/Thr protein kinase family. Casein kinase I subfamily. Interacts with the Axin complex. Interacts with TUT1, leading to TUT1 phosphorylation. Interacts with FAM83A, FAM83B, FAM83C, FAM83D, FAM83E, FAM83F, FAM83G and FAM83H (via DUF1669). Interaction with FAM83H recruits CSNK1A1 to keratin filaments. In terms of processing, phosphorylated by MTOR in response to mitogenic stimulation, leading to its activation.

Its subcellular location is the cytoplasm. The protein resides in the cytoskeleton. It is found in the microtubule organizing center. It localises to the centrosome. The protein localises to the chromosome. Its subcellular location is the centromere. The protein resides in the kinetochore. It is found in the nucleus speckle. It localises to the cilium basal body. The protein localises to the spindle. It catalyses the reaction L-seryl-[protein] + ATP = O-phospho-L-seryl-[protein] + ADP + H(+). The catalysed reaction is L-threonyl-[protein] + ATP = O-phospho-L-threonyl-[protein] + ADP + H(+). In terms of biological role, casein kinases are operationally defined by their preferential utilization of acidic proteins such as caseins as substrates. It can phosphorylate a large number of proteins. Participates in Wnt signaling. Phosphorylates CTNNB1 at 'Ser-45'. May phosphorylate PER1 and PER2. May play a role in segregating chromosomes during mitosis. May play a role in keratin cytoskeleton disassembly and thereby, it may regulate epithelial cell migration. Acts as a positive regulator of mTORC1 and mTORC2 signaling in response to nutrients by mediating phosphorylation of DEPTOR inhibitor. Acts as an inhibitor of NLRP3 inflammasome assembly by mediating phosphorylation of NLRP3. In Sus scrofa (Pig), this protein is Casein kinase I isoform alpha (CSNK1A1).